The primary structure comprises 318 residues: tRNA uridine(34) hydroxylase (318 aa).

The region spanning 123–217 is the Rhodanese domain; that stretch reads EDDDTVIIDA…YGKDPETKGQ (95 aa). Cys-177 (cysteine persulfide intermediate) is an active-site residue.

It belongs to the TrhO family.

It catalyses the reaction uridine(34) in tRNA + AH2 + O2 = 5-hydroxyuridine(34) in tRNA + A + H2O. Its function is as follows. Catalyzes oxygen-dependent 5-hydroxyuridine (ho5U) modification at position 34 in tRNAs. The sequence is that of tRNA uridine(34) hydroxylase from Staphylococcus aureus (strain bovine RF122 / ET3-1).